Here is a 427-residue protein sequence, read N- to C-terminus: 3-phosphoshikimate 1-carboxyvinyltransferase (427 aa).

K22, S23, and R27 together coordinate 3-phosphoshikimate. K22 contributes to the phosphoenolpyruvate binding site. Phosphoenolpyruvate contacts are provided by G96 and R124. Positions 169, 170, 171, 197, 313, 336, and 340 each coordinate 3-phosphoshikimate. Q171 contacts phosphoenolpyruvate. The active-site Proton acceptor is the D313. Residues R344, R386, and K411 each contribute to the phosphoenolpyruvate site.

Belongs to the EPSP synthase family. As to quaternary structure, monomer.

It is found in the cytoplasm. The enzyme catalyses 3-phosphoshikimate + phosphoenolpyruvate = 5-O-(1-carboxyvinyl)-3-phosphoshikimate + phosphate. It functions in the pathway metabolic intermediate biosynthesis; chorismate biosynthesis; chorismate from D-erythrose 4-phosphate and phosphoenolpyruvate: step 6/7. Its function is as follows. Catalyzes the transfer of the enolpyruvyl moiety of phosphoenolpyruvate (PEP) to the 5-hydroxyl of shikimate-3-phosphate (S3P) to produce enolpyruvyl shikimate-3-phosphate and inorganic phosphate. The chain is 3-phosphoshikimate 1-carboxyvinyltransferase from Klebsiella pneumoniae (strain 342).